A 616-amino-acid polypeptide reads, in one-letter code: MRLLPSSCAGALSLLCSLAIAAPTELKARDLSSFIASERAIALQGALNNIGPDGSAVPGAGAGFVVASPSKANPDYFYTWSRDSALTLKMIIDEFILGNTTLQTIIEQYIHAQAVLQTVSNPSGTFLPDGVGLGEPKFMVDGTRFNGPWGRPQRDGPALRAIALMTYSNWLIKNGQFAEAKTKIWPIIANDLSYVGQYWNQSGFDLWEETYASSFFTIQNQHRALVEGAQLAHDLGVTCTGCDQAPEVLCFLQSFWNGKYIVSNINVNNGRTGLDGNSILGAISTFDIDAYCDSPTLQPCHSQSLANFKVLTDTFRNLYTINAGIPEGQGVAVGRYAEDVYMGGNPWYLITTAAAEFLYDAVAQWKARHVLTVDETSLAFFKDIYPEVTVREYKSGNANSPFAQIMDAVTAYADSYVAIAEKYIPSNGSLSEQFNRDTGTPLSAIDLTWSYAAFITMSQRRAGQYPSSWGSRNALPPPTTCSASSTPGIYTPATAAGAPNVTSSCQVSITFNINATTYYGENLYVIGNSSDLGAWNIADAYPLSASAYTQDRPLWSAAIPLNAGEVISYQYVRQEDCDQPYIYETVNRTLTVPACGGAAVTTDDAWMGPVGSSGNC.

The N-terminal stretch at 1–29 (MRLLPSSCAGALSLLCSLAIAAPTELKAR) is a signal peptide. Trp-149 is a substrate binding site. N-linked (GlcNAc...) asparagine glycosylation occurs at Asn-200. The active-site Proton acceptor is Asp-205. The Proton donor role is filled by Glu-208. Asn-427 carries N-linked (GlcNAc...) asparagine glycosylation. The region spanning 501 to 608 (VTSSCQVSIT…AVTTDDAWMG (108 aa)) is the CBM20 domain.

Belongs to the glycosyl hydrolase 15 family.

It is found in the secreted. The catalysed reaction is Hydrolysis of terminal (1-&gt;4)-linked alpha-D-glucose residues successively from non-reducing ends of the chains with release of beta-D-glucose.. The chain is Glucoamylase P (GAMP) from Amorphotheca resinae (Creosote fungus).